The following is a 600-amino-acid chain: Proline--tRNA ligase (600 aa).

This sequence belongs to the class-II aminoacyl-tRNA synthetase family. ProS type 1 subfamily. In terms of assembly, homodimer.

The protein resides in the cytoplasm. It catalyses the reaction tRNA(Pro) + L-proline + ATP = L-prolyl-tRNA(Pro) + AMP + diphosphate. Functionally, catalyzes the attachment of proline to tRNA(Pro) in a two-step reaction: proline is first activated by ATP to form Pro-AMP and then transferred to the acceptor end of tRNA(Pro). As ProRS can inadvertently accommodate and process non-cognate amino acids such as alanine and cysteine, to avoid such errors it has two additional distinct editing activities against alanine. One activity is designated as 'pretransfer' editing and involves the tRNA(Pro)-independent hydrolysis of activated Ala-AMP. The other activity is designated 'posttransfer' editing and involves deacylation of mischarged Ala-tRNA(Pro). The misacylated Cys-tRNA(Pro) is not edited by ProRS. This Acaryochloris marina (strain MBIC 11017) protein is Proline--tRNA ligase.